The sequence spans 147 residues: uncharacterized protein (147 aa).

One can recognise a CMP/dCMP-type deaminase domain in the interval 4–120 (KWAKRFFQMA…EQTEDFLSRW (117 aa)). His67 contributes to the Zn(2+) binding site. Glu69 serves as the catalytic Proton donor. Residues Cys92 and Cys95 each coordinate Zn(2+).

It belongs to the cytidine and deoxycytidylate deaminase family. Requires Zn(2+) as cofactor.

This is an uncharacterized protein from Aliivibrio fischeri (Vibrio fischeri).